The primary structure comprises 318 residues: GTP cyclohydrolase MptA (318 aa).

This sequence belongs to the GTP cyclohydrolase IV family. As to quaternary structure, homodimer. Fe(2+) serves as cofactor.

The catalysed reaction is GTP + H2O = 7,8-dihydroneopterin 2',3'-cyclic phosphate + formate + diphosphate + H(+). It participates in cofactor biosynthesis; 5,6,7,8-tetrahydromethanopterin biosynthesis. Converts GTP to 7,8-dihydro-D-neopterin 2',3'-cyclic phosphate, the first intermediate in the biosynthesis of coenzyme methanopterin. The sequence is that of GTP cyclohydrolase MptA from Methanosarcina mazei (strain ATCC BAA-159 / DSM 3647 / Goe1 / Go1 / JCM 11833 / OCM 88) (Methanosarcina frisia).